The chain runs to 474 residues: Trichothecene 3-O-acetyltransferase (474 aa).

Belongs to the trichothecene 3-O-acetyltransferase family.

Trichothecene 3-O-acetyltransferase involved in self-protection against trichothecenes, mycotoxins acting as eukaryotic protein synthesis inhibitors. Its existence is surprising in a non-trichothecene producer organism which needs no self-protection again endogenic trichothecenes. The persistence of this non-essential gene may be due to a selective advantage that it may confer, like a resistance to exogenic trichothecenes. This Saccharomyces cerevisiae (strain ATCC 204508 / S288c) (Baker's yeast) protein is Trichothecene 3-O-acetyltransferase (AYT1).